The following is a 1183-amino-acid chain: Protein deacetylase HDAC6 (1183 aa).

Positions 1-61 (MTSTGQDSST…KGKMKKLSQP (61 aa)) are disordered. Positions 18-29 (NPQSPLQDSSAT) are enriched in polar residues. S21 is subject to Phosphoserine. Position 32 is an omega-N-methylarginine (R32). The short motif at 66–75 (LIVGLQGLDL) is the Nuclear export signal element. Histone deacetylase regions lie at residues 86–434 (GLVF…TLLG) and 512–830 (GLVY…SLLG). Catalysis depends on H215, which acts as the 1. H641 functions as the 2 in the catalytic mechanism. The interval 972–1042 (ATENSANQTT…EAQEVQESEE (71 aa)) is disordered. The span at 980 to 996 (TTSGEEASGETESFGTS) shows a compositional bias: low complexity. Phosphothreonine is present on residues T990, T995, and T1005. Polar residues predominate over residues 997–1008 (PSSNASKQTTGA). The residue at position 1009 (S1009) is a Phosphoserine. Low complexity predominate over residues 1021 to 1035 (ELGLSSTLELSSEAQ). A UBP-type zinc finger spans residues 1079 to 1177 (SWCPHLMAVC…NAAHQNKFGE (99 aa)). Zn(2+) contacts are provided by C1081, H1083, C1101, C1104, C1113, C1116, and C1121. The tract at residues 1122 to 1124 (SRY) is ubiquitin binding. Zn(2+)-binding residues include H1128, H1132, H1138, C1151, and C1154. Residues 1150-1157 (WCYLCQAY) are ubiquitin binding.

The protein belongs to the histone deacetylase family. HD type 2 subfamily. In terms of assembly, forms a trimeric complex in the nucleus consisting of BANP, HDAC6 and KHDRBS1/SAM68; HDAC6 keeps KHDRBS1 in a deacetylated state which inhibits the inclusion of CD44 alternate exons. The complex is disrupted by MAPK1/MAPK3-mediated phosphorylation of BANP which results in BANP export to the cytoplasm. This facilitates acetylation of KHDRBS1 and CD44 variant exon inclusion. Interacts with SIRT2 (via both phosphorylated, unphosphorylated, active or inactive forms); the interaction is necessary for the complex to interact with alpha-tubulin. Under proteasome impairment conditions, interacts with UBD via its histone deacetylase 1 and UBP-type zinc-finger regions. Interacts with BBIP1, CBFA2T3, CYLD, DDIT3/CHOP, ZMYND15, F-actin and HDAC11. Interacts with RIPOR2; this interaction occurs during early myogenic differentiation and prevents HDAC6 to deacetylate tubulin. Interacts with AURKA; AURKA-mediated phosphorylation of HDAC6 promotes deacetylation of alpha-tubulin. Interacts with DYSF; this interaction occurs during early myogenic differentiation. Interacts with TPPP; inhibiting the tubulin deacetylase activity of HDAC6. Interacts with DYNLL1. Interacts with ATP13A2; the interaction results in recruitment of HDAC6 to lysosomes to promote CTTN deacetylation. Interacts with CCDC141 (via the N-terminal region); inhibiting the deacetylase activity of HDAC6. Interacts with IPO7; the interaction facilitates HDAC6 nuclear translocation in dental papilla cells. The cofactor is Zn(2+). Phosphorylated by AURKA; phosphorylation increases HDAC6-mediated deacetylation of alpha-tubulin and subsequent disassembly of cilia. Post-translationally, ubiquitinated. Its polyubiquitination however does not lead to its degradation. In terms of processing, sumoylated in vitro.

The protein localises to the cytoplasm. The protein resides in the cytoskeleton. Its subcellular location is the nucleus. It is found in the perikaryon. It localises to the cell projection. The protein localises to the dendrite. The protein resides in the axon. Its subcellular location is the cilium. It is found in the microtubule organizing center. It localises to the centrosome. The protein localises to the cilium basal body. It carries out the reaction N(6)-acetyl-L-lysyl-[protein] + H2O = L-lysyl-[protein] + acetate. The catalysed reaction is N(6)-acetyl-L-lysyl-[alpha-tubulin] + H2O = L-lysyl-[alpha-tubulin] + acetate. Its pathway is protein modification; protein ubiquitination. In terms of biological role, deacetylates a wide range of non-histone substrates. Plays a central role in microtubule-dependent cell motility by mediating deacetylation of tubulin. Required for cilia disassembly via deacetylation of alpha-tubulin. Alpha-tubulin deacetylation results in destabilization of dynamic microtubules. Promotes deacetylation of CTTN, leading to actin polymerization, promotion of autophagosome-lysosome fusion and completion of autophagy. Deacetylates SQSTM1. Deacetylates peroxiredoxins PRDX1 and PRDX2, decreasing their reducing activity. Deacetylates antiviral protein RIGI in the presence of viral mRNAs which is required for viral RNA detection by RIGI. Sequentially deacetylates and polyubiquitinates DNA mismatch repair protein MSH2 which leads to MSH2 degradation, reducing cellular sensitivity to DNA-damaging agents and decreasing cellular DNA mismatch repair activities. Deacetylates DNA mismatch repair protein MLH1 which prevents recruitment of the MutL alpha complex (formed by the MLH1-PMS2 heterodimer) to the MutS alpha complex (formed by the MSH2-MSH6 heterodimer), leading to tolerance of DNA damage. Deacetylates RHOT1/MIRO1 which blocks mitochondrial transport and mediates axon growth inhibition. Deacetylates transcription factor SP1 which leads to increased expression of ENG, positively regulating angiogenesis. Deacetylates KHDRBS1/SAM68 which regulates alternative splicing by inhibiting the inclusion of CD44 alternate exons. Promotes odontoblast differentiation following IPO7-mediated nuclear import and subsequent repression of RUNX2 expression. In addition to its protein deacetylase activity, plays a key role in the degradation of misfolded proteins: when misfolded proteins are too abundant to be degraded by the chaperone refolding system and the ubiquitin-proteasome, mediates the transport of misfolded proteins to a cytoplasmic juxtanuclear structure called aggresome. Probably acts as an adapter that recognizes polyubiquitinated misfolded proteins and targets them to the aggresome, facilitating their clearance by autophagy. In Rattus norvegicus (Rat), this protein is Protein deacetylase HDAC6.